Here is a 213-residue protein sequence, read N- to C-terminus: ATP phosphoribosyltransferase (213 aa).

It belongs to the ATP phosphoribosyltransferase family. Short subfamily. As to quaternary structure, heteromultimer composed of HisG and HisZ subunits.

It localises to the cytoplasm. The catalysed reaction is 1-(5-phospho-beta-D-ribosyl)-ATP + diphosphate = 5-phospho-alpha-D-ribose 1-diphosphate + ATP. It functions in the pathway amino-acid biosynthesis; L-histidine biosynthesis; L-histidine from 5-phospho-alpha-D-ribose 1-diphosphate: step 1/9. Catalyzes the condensation of ATP and 5-phosphoribose 1-diphosphate to form N'-(5'-phosphoribosyl)-ATP (PR-ATP). Has a crucial role in the pathway because the rate of histidine biosynthesis seems to be controlled primarily by regulation of HisG enzymatic activity. In Saccharophagus degradans (strain 2-40 / ATCC 43961 / DSM 17024), this protein is ATP phosphoribosyltransferase.